The following is a 604-amino-acid chain: MPKHYRPAGKKKEGNAAKYITRTKAVKYLQISLATFRKLCILKGVFPRDPKKKVEGNHKTYYHMKDIAFLAHDPLIEKFREIKVHRKKVKKAFAKKNKDLADRLLNRPPTYKLDRLILERYPTFVDALRDLDDCLTMVHLFAALPAVEGERVQVQRIHNCRRLSHEWQAYISRTHSLRKTFISVKGIYYQAEVQGQKITWLTPHALQQVLTDDVDFNVMLTFLEFYETLLGFINFKLYHSINVNYPPVLDPRLEALASELYALCRYMSSGRVPGNSEPAGLIEDKEGEDNKESSKTDESELRLAQLQHQLPTNEPGALMHLVQESTAADADDADAKECRSLFKNLKFYLSREVPRESLLFIIPAFGGTVSWEGEGAPFDETDEDITHQIVDRPTQSHVFLSREYVQPQWIYDCVNARIILPTEGYIVGRVPPPHLSPFVDNDAEGYIPEYAETIKRLQAAAQSQVLPLPSLGDEDMENSLVEAIIDRSESNEIADKKRKLEMLEKQYHDELRMEYEGKTFSNRTADNQPDVVDKSDTKEADDHMEDSHKQAEKDAADISKTLMSRKQRGLLQAIEINQERKKDKVNLLKKRKKNADSSASAKGR.

Residues 275 to 299 (NSEPAGLIEDKEGEDNKESSKTDES) form a disordered region. The segment covering 282–299 (IEDKEGEDNKESSKTDES) has biased composition (basic and acidic residues). The region spanning 337 to 427 (ECRSLFKNLK…IILPTEGYIV (91 aa)) is the BRCT domain. Disordered regions lie at residues 518–557 (KTFS…DAAD) and 574–604 (IEIN…AKGR). Basic and acidic residues-rich tracts occupy residues 531–557 (VVDK…DAAD) and 577–586 (NQERKKDKVN).

It belongs to the pescadillo family.

It is found in the nucleus. Its subcellular location is the nucleolus. The protein localises to the nucleoplasm. Its function is as follows. Required for maturation of ribosomal RNAs and formation of the large ribosomal subunit. This chain is Pescadillo homolog (PES), found in Oryza sativa subsp. japonica (Rice).